The sequence spans 360 residues: Snurportin-1 (360 aa).

Residue methionine 1 is modified to N-acetylmethionine. The tract at residues 1-42 is disordered; it reads MEELSQALASSFSVSQDLNSTAAPHPRLSQYKSKYSSLEQSE. Residues 1–65 are necessary for interaction with KPNB1 and m3G-cap U1 and U5 snRNP import receptor activity; that stretch reads MEELSQALAS…LDYVNHARRL (65 aa). Residues 1–159 form a necessary for interaction with XPO1 region; it reads MEELSQALAS…NRFSSLLPGG (159 aa). Polar residues predominate over residues 7 to 22; the sequence is ALASSFSVSQDLNSTA. In terms of domain architecture, IBB spans 11-73; it reads SFSVSQDLNS…RLAEDDWTGM (63 aa). Serine 75 carries the post-translational modification Phosphoserine. The segment at 127-129 is interaction with m3G-cap structure; that stretch reads GKR. The tract at residues 208-328 is necessary for binding to the m3G-cap structure; it reads MHSKLPEEEG…GMKEKLTHKA (121 aa). The tract at residues 339-360 is disordered; the sequence is LSTPKLKGSSHSPDHPGCLMEN. Serine 350 is modified (phosphoserine).

It belongs to the snurportin family. As to quaternary structure, component of an import snRNP complex composed of KPNB1, SNUPN, SMN1 and ZNF259. Component of a nuclear export receptor complex composed of KPNB1, Ran, SNUPN and XPO1. Found in a trimeric export complex with SNUPN, Ran and XPO1. Interacts (via IBB domain) with KPNB1; the interaction is direct. Interacts with DDX20, IPO7, SMN1, SNRPB and XPO1. Interacts directly with XPO1. Its interaction with XPO1 and binding to m3G-cap U snRNPs appears to be mutually exclusive. Can form homomers.

The protein localises to the nucleus. It localises to the cytoplasm. Functionally, functions as an U snRNP-specific nuclear import adapter. Involved in the trimethylguanosine (m3G)-cap-dependent nuclear import of U snRNPs. Binds specifically to the terminal m3G-cap U snRNAs. This Homo sapiens (Human) protein is Snurportin-1 (SNUPN).